A 464-amino-acid polypeptide reads, in one-letter code: MDSNAAEKSSKEIIEDLQRQLLTEKNRNRTLVEELKQLRDSHARIQIVTENEEEYITNKFMKYLNQLKKEKEELALKVEQEEEYLTNTLQKKMLTIMKEKVDLENQLEQEEEFIVNKLQKQIQDVMKDKKALEKRLENEINDHRSLLKLQDEVIVLRDKIKELESNGNKKEDIDALKAENFVLGQKIIREQEKLSKVNSENTKLMSNLEIDDERNFNNKSKRNRSISFPTSMASTTTTTTTSITSSTTSITSSTSSINSSGSSSTNNTCNNNSSSNIPTSPLSCSSNSSGGGGGSGSLNNSCNSNCSNSSNSSNNNCNNNNNNNNGNSKLSTGVPITRSRSSSSNSNPCLITKIVKEGWLKRKSISSSNQETLEKRYYEISTDGEMREYFDETKQIPTSQYINLDTCFQIDIVTDNPNHPGYSDIKLYIKTNSISPVEIITFSTSSNDCNDWKDTISSLMPLKR.

Positions 8–210 (KSSKEIIEDL…NTKLMSNLEI (203 aa)) form a coiled coil. Disordered regions lie at residues 215 to 290 (NFNN…NSSG) and 317 to 347 (CNNN…SNSN). Low complexity-rich tracts occupy residues 234-288 (STTT…SSNS), 317-328 (CNNNNNNNNGNS), and 338-347 (RSRSSSSNSN). The PH domain maps to 353–461 (KIVKEGWLKR…WKDTISSLMP (109 aa)).

The protein is PH domain-containing rcdII (rcdII) of Dictyostelium discoideum (Social amoeba).